The following is a 573-amino-acid chain: ATP-dependent RNA helicase RhlB (573 aa).

The short motif at 9–37 is the Q motif element; sequence LTFSSFDLHPALVAGLESAGFTRCTPIQA. A Helicase ATP-binding domain is found at 40 to 220; it reads LPVALPGGDV…YEHMNEPEKL (181 aa). 53-60 provides a ligand contact to ATP; sequence AQTGTGKT. Residues 166 to 169 carry the DEAD box motif; the sequence is DEAD. One can recognise a Helicase C-terminal domain in the interval 231–393; sequence RVRQRIYFPS…PVTTELLTPL (163 aa). Positions 391–400 are enriched in low complexity; the sequence is TPLPRTPRAT. Positions 391 to 559 are disordered; sequence TPLPRTPRAT…AKPSGSPSLL (169 aa). A compositionally biased stretch (acidic residues) spans 402–411; that stretch reads EGEEVDDDAG. The span at 419–432 shows a compositional bias: basic and acidic residues; that stretch reads REAREQRAADEARR. Over residues 435–449 the composition is skewed to gly residues; sequence GRSGPGGASRSGSGG. A compositionally biased stretch (basic and acidic residues) spans 450–461; the sequence is GRRDGAGADGKP. Positions 476–499 are enriched in low complexity; that stretch reads PAAAPSETPVVVAAAAETPAVTAA. The segment covering 505 to 514 has biased composition (basic residues); it reads PRKRRRRRNG. 2 stretches are compositionally biased toward low complexity: residues 516–528 and 541–559; these read PVEG…ASTP and VVAK…PSLL.

Belongs to the DEAD box helicase family. RhlB subfamily. In terms of assembly, component of the RNA degradosome, which is a multiprotein complex involved in RNA processing and mRNA degradation.

Its subcellular location is the cytoplasm. It catalyses the reaction ATP + H2O = ADP + phosphate + H(+). Its function is as follows. DEAD-box RNA helicase involved in RNA degradation. Has RNA-dependent ATPase activity and unwinds double-stranded RNA. The sequence is that of ATP-dependent RNA helicase RhlB from Xanthomonas campestris pv. campestris (strain B100).